A 339-amino-acid polypeptide reads, in one-letter code: 5-dehydro-2-deoxygluconokinase (339 aa).

This sequence belongs to the carbohydrate kinase PfkB family.

The enzyme catalyses 5-dehydro-2-deoxy-D-gluconate + ATP = 6-phospho-5-dehydro-2-deoxy-D-gluconate + ADP + H(+). It functions in the pathway polyol metabolism; myo-inositol degradation into acetyl-CoA; acetyl-CoA from myo-inositol: step 5/7. In terms of biological role, catalyzes the phosphorylation of 5-dehydro-2-deoxy-D-gluconate (2-deoxy-5-keto-D-gluconate or DKG) to 6-phospho-5-dehydro-2-deoxy-D-gluconate (DKGP). In Clostridium botulinum (strain Eklund 17B / Type B), this protein is 5-dehydro-2-deoxygluconokinase.